Consider the following 214-residue polypeptide: Ribosomal RNA small subunit methyltransferase G (214 aa).

Residues G73, L78, 124–125 (VE), and R139 each bind S-adenosyl-L-methionine.

It belongs to the methyltransferase superfamily. RNA methyltransferase RsmG family.

It localises to the cytoplasm. It catalyses the reaction guanosine(527) in 16S rRNA + S-adenosyl-L-methionine = N(7)-methylguanosine(527) in 16S rRNA + S-adenosyl-L-homocysteine. Its function is as follows. Specifically methylates the N7 position of guanine in position 527 of 16S rRNA. The polypeptide is Ribosomal RNA small subunit methyltransferase G (Aeromonas hydrophila subsp. hydrophila (strain ATCC 7966 / DSM 30187 / BCRC 13018 / CCUG 14551 / JCM 1027 / KCTC 2358 / NCIMB 9240 / NCTC 8049)).